The primary structure comprises 402 residues: Probable 2,3-bisphosphoglycerate-independent phosphoglycerate mutase (402 aa).

Belongs to the BPG-independent phosphoglycerate mutase family. A-PGAM subfamily.

The enzyme catalyses (2R)-2-phosphoglycerate = (2R)-3-phosphoglycerate. Its pathway is carbohydrate degradation; glycolysis; pyruvate from D-glyceraldehyde 3-phosphate: step 3/5. Its function is as follows. Catalyzes the interconversion of 2-phosphoglycerate and 3-phosphoglycerate. This chain is Probable 2,3-bisphosphoglycerate-independent phosphoglycerate mutase, found in Thermosipho melanesiensis (strain DSM 12029 / CIP 104789 / BI429).